A 317-amino-acid chain; its full sequence is Olfactory receptor-like protein OLF3 (317 aa).

At 1 to 25 (MGTGNQTWVREFVLLGLSSDWDTEV) the chain is on the extracellular side. Residue N5 is glycosylated (N-linked (GlcNAc...) asparagine). The helical transmembrane segment at 26–49 (SLFVLFLITYMVTVLGNFLIILLI) threads the bilayer. The Cytoplasmic portion of the chain corresponds to 50–57 (RLDSRLHT). A helical membrane pass occupies residues 58 to 79 (PMYFFLTNLSLVDVSYATSIIP). Topologically, residues 80-100 (QMLAHLLAAHKAIPFVSCAAQ) are extracellular. The helical transmembrane segment at 101–120 (LFFSLGLGGIEFVLLAVMAY) threads the bilayer. At 121–139 (DRYVAVCDPLRYSVIMHGG) the chain is on the cytoplasmic side. A helical membrane pass occupies residues 140–158 (LCTRLAITSWVSGSMNSLM). Residues 159 to 196 (QTVITFQLPMCTNKYIDHISCELLAVVRLACVDTSSNE) lie on the Extracellular side of the membrane. The helical transmembrane segment at 197 to 219 (IAIMVSSIVLLMTPFCLVLLSYI) threads the bilayer. At 220 to 236 (QIISTILKIQSTEGRKK) the chain is on the cytoplasmic side. The helical transmembrane segment at 237 to 260 (AFHTCASHLTVVVLCYGMAIFTYI) threads the bilayer. The Extracellular segment spans residues 261 to 272 (QPRSSPSVLQEK). Residues 273 to 292 (LISLFYSVLTPMLNPMIYSV) traverse the membrane as a helical segment. Residues 293 to 317 (RNKEVKGAWQKLLGQLTGITSKLAT) lie on the Cytoplasmic side of the membrane.

Belongs to the G-protein coupled receptor 1 family.

The protein localises to the cell membrane. Functionally, putative odorant or sperm cell receptor. The sequence is that of Olfactory receptor-like protein OLF3 from Canis lupus familiaris (Dog).